The chain runs to 135 residues: Large ribosomal subunit protein mL54 (135 aa).

This sequence belongs to the mitochondrion-specific ribosomal protein mL54 family. Component of the mitochondrial ribosome large subunit (39S) which comprises a 16S rRNA and about 50 distinct proteins.

The protein resides in the mitochondrion. This Danio rerio (Zebrafish) protein is Large ribosomal subunit protein mL54 (mrpl54).